Reading from the N-terminus, the 1291-residue chain is MSSLPGCIGLDAATATVESEEIAELQQAVVEELGISMEELRHFIDEELEKMDCVQQRKKQLAELETWVIQKESEVAHVDQLFDDASRAVTNCESLVKDFYSKLGLQYRDSSSEDESSRPTEIIEIPDEDDDVLSIDSGDAGSRTPKDQKLREAMAALRKSAQDVQKFMDAVNKKSSSQDLHKGTLSQMSGELSKDGDLIVSMRILGKKRTKTWHKGTLIAIQTVGPGKKYKVKFDNKGKSLLSGNHIAYDYHPPADKLYVGSRVVAKYKDGNQVWLYAGIVAETPNVKNKLRFLIFFDDGYASYVTQSELYPICRPLKKTWEDIEDISCRDFIEEYVTAYPNRPMVLLKSGQLIKTEWEGTWWKSRVEEVDGSLVRILFLDDKRCEWIYRGSTRLEPMFSMKTSSASALEKKQGQLRTRPNMGAVRSKGPVVQYTQDLTGTGTQFKPVEPPQPTAPPAPPFPPAPPLSPQAGDSDLESQLAQSRKQVAKKSTSFRPGSVGSGHSSPTSPALSENVSGGKPGINQTYRSPLGSTASAPAPSALPAPPAPPVFHGMLERAPAEPSYRAPMEKLFYLPHVCSYTCLSRVRPMRNEQYRGKNPLLVPLLYDFRRMTARRRVNRKMGFHVIYKTPCGLCLRTMQEIERYLFETGCDFLFLEMFCLDPYVLVDRKFQPYKPFYYILDITYGKEDVPLSCVNEIDTTPPPQVAYSKERIPGKGVFINTGPEFLVGCDCKDGCRDKSKCACHQLTIQATACTPGGQINPNSGYQYKRLEECLPTGVYECNKRCKCDPNMCTNRLVQHGLQVRLQLFKTQNKGWGIRCLDDIAKGSFVCIYAGKILTDDFADKEGLEMGDEYFANLDHIESVENFKEGYESDAPCSSDSSGVDLKDQEDGNSGTEDPEESNDDSSDDNFCKDEDFSTSSVWRSYATRRQTRGQKENGLSETTSKDSHPPDLGPPHIPVPPSIPVGGCNPPSSEETPKNKVASWLSCNSVSEGGFADSDSHSSFKTNEGGEGRAGGSRMEAEKASTSGLGIKDEGDIKQAKKEDTDDRNKMSVVTESSRNYGYNPSPVKPEGLRRPPSKTSMHQSRRLMASAQSNPDDVLTLSSSTESEGESGTSRKPTAGQTSATAVDSDDIQTISSGSEGDDFEDKKNMTGPMKRQVAVKSTRGFALKSTHGIAIKSTNMASVDKGESAPVRKNTRQFYDGEESCYIIDAKLEGNLGRYLNHSCSPNLFVQNVFVDTHDLRFPWVAFFASKRIRAGTELTWDYNYEVGSVEGKELLCCCGAIECRGRLL.

A coiled-coil region spans residues 18–64 (ESEEIAELQQAVVEELGISMEELRHFIDEELEKMDCVQQRKKQLAEL). The tract at residues 108–147 (RDSSSEDESSRPTEIIEIPDEDDDVLSIDSGDAGSRTPKD) is disordered. S112 and S117 each carry phosphoserine. The residue at position 120 (T120) is a Phosphothreonine. Residues 124-133 (EIPDEDDDVL) are compositionally biased toward acidic residues. K182 is covalently cross-linked (Glycyl lysine isopeptide (Lys-Gly) (interchain with G-Cter in SUMO2); alternate). Residue K182 forms a Glycyl lysine isopeptide (Lys-Gly) (interchain with G-Cter in ubiquitin); alternate linkage. 2 consecutive Tudor domains span residues 257–320 (KLYV…LKKT) and 347–403 (LLKS…SMKT). The segment at 404 to 545 (SSASALEKKQ…APAPSALPAP (142 aa)) is disordered. Residues 433–444 (QYTQDLTGTGTQ) are compositionally biased toward polar residues. The segment covering 448 to 468 (VEPPQPTAPPAPPFPPAPPLS) has biased composition (pro residues). Residues 477–515 (ESQLAQSRKQVAKKSTSFRPGSVGSGHSSPTSPALSENV) show a composition bias toward polar residues. Residues 528-539 (SPLGSTASAPAP) show a composition bias toward low complexity. One can recognise an MBD domain in the interval 594-665 (YRGKNPLLVP…EMFCLDPYVL (72 aa)). The Pre-SET domain occupies 727–800 (VGCDCKDGCR…MCTNRLVQHG (74 aa)). Zn(2+) contacts are provided by C729, C731, C735, C741, C743, C781, C785, C787, and C792. Residues 803–1266 (VRLQLFKTQN…AGTELTWDYN (464 aa)) enclose the SET domain. S-adenosyl-L-methionine-binding positions include 813-815 (KGW), D851, and Y853. Residue K867 forms a Glycyl lysine isopeptide (Lys-Gly) (interchain with G-Cter in ubiquitin) linkage. A disordered region spans residues 868-1160 (EGYESDAPCS…MTGPMKRQVA (293 aa)). Residues 896–907 (EDPEESNDDSSD) show a composition bias toward acidic residues. Over residues 951–963 (DLGPPHIPVPPSI) the composition is skewed to pro residues. At S1025 the chain carries Phosphoserine. Residues 1031-1050 (IKDEGDIKQAKKEDTDDRNK) are compositionally biased toward basic and acidic residues. K1032 participates in a covalent cross-link: Glycyl lysine isopeptide (Lys-Gly) (interchain with G-Cter in SUMO2); alternate. Residue K1032 forms a Glycyl lysine isopeptide (Lys-Gly) (interchain with G-Cter in SUMO1); alternate linkage. K1038 participates in a covalent cross-link: Glycyl lysine isopeptide (Lys-Gly) (interchain with G-Cter in SUMO2). A compositionally biased stretch (polar residues) spans 1052 to 1063 (SVVTESSRNYGY). Position 1066 is a phosphoserine (S1066). A Glycyl lysine isopeptide (Lys-Gly) (interchain with G-Cter in SUMO2) cross-link involves residue K1069. Low complexity predominate over residues 1100–1115 (LTLSSSTESEGESGTS). The span at 1116-1140 (RKPTAGQTSATAVDSDDIQTISSGS) shows a compositional bias: polar residues. A Glycyl lysine isopeptide (Lys-Gly) (interchain with G-Cter in SUMO2) cross-link involves residue K1149. K1170 and K1178 each carry N6,N6,N6-trimethyllysine; alternate. 2 positions are modified to N6,N6-dimethyllysine; alternate: K1170 and K1178. Residues R1220 and 1223–1224 (NH) each bind S-adenosyl-L-methionine. The Zn(2+) site is built by C1226, C1279, C1281, and C1286. The 17-residue stretch at 1275 to 1291 (KELLCCCGAIECRGRLL) folds into the Post-SET domain.

It belongs to the class V-like SAM-binding methyltransferase superfamily. Histone-lysine methyltransferase family. Suvar3-9 subfamily. Part of a complex containing at least CDYL, REST, WIZ, SETDB1, EHMT1 and EHMT2. Forms a complex with ATRX, TRIM28 and ZNF274. Probably part of a corepressor complex containing ZNF304, TRIM28, SETDB1 and DNMT1. Interacts with TRIM28/TIF1B. Interacts with ATF7IP and ATF7IP2; the interaction with ATF7IP protects SETDB1 from proteasomal degradation and is required to stimulate histone methyltransferase activity and facilitate the conversion of dimethylated to trimethylated H3 'Lys-9'. Interacts with CBX1 and CBX5. Interacts with DNMT3A and DNMT3B. Interacts with SUMO2. Interacts with MPHOSPH8. Interacts with ERG. Interacts with HDAC1, HDAC2, SIN3A and SIN3B. Interacts with ATRX. Interacts with RESF1. Interacts with ZNF638. Interacts with TASOR. Interacts with ZNF263; recruited to the SIX3 promoter along with other proteins involved in chromatin modification and transcriptional corepression where it contributes to transcriptional repression. Interacts with PHF13; the interaction probably enhances SETDB1 chromatin-associated levels and activity. Interacts with VRK1. In terms of processing, degraded by the proteasome, shielded by interaction with ATF7IP. Monoubiquitinated at Lys-867 by E2 enzymes of the UBE2E family. The conjugated-Ub is protected from deubiquitination by the SET domain. Monoubiquitination at Lys-867 is required for catalytic activity, H3K9 methylation and endogenous retrovirus silencing. Widely expressed. High expression in testis.

The protein localises to the nucleus. Its subcellular location is the cytoplasm. The protein resides in the chromosome. It catalyses the reaction N(6),N(6)-dimethyl-L-lysyl(9)-[histone H3] + S-adenosyl-L-methionine = N(6),N(6),N(6)-trimethyl-L-lysyl(9)-[histone H3] + S-adenosyl-L-homocysteine + H(+). In terms of biological role, histone methyltransferase that specifically trimethylates 'Lys-9' of histone H3. H3 'Lys-9' trimethylation represents a specific tag for epigenetic transcriptional repression by recruiting HP1 (CBX1, CBX3 and/or CBX5) proteins to methylated histones. Mainly functions in euchromatin regions, thereby playing a central role in the silencing of euchromatic genes. H3 'Lys-9' trimethylation is coordinated with DNA methylation. Required for HUSH-mediated heterochromatin formation and gene silencing. Forms a complex with MBD1 and ATF7IP that represses transcription and couples DNA methylation and histone 'Lys-9' trimethylation. Its activity is dependent on MBD1 and is heritably maintained through DNA replication by being recruited by CAF-1. SETDB1 is targeted to histone H3 by TRIM28/TIF1B, a factor recruited by KRAB zinc-finger proteins. Probably forms a corepressor complex required for activated KRAS-mediated promoter hypermethylation and transcriptional silencing of tumor suppressor genes (TSGs) or other tumor-related genes in colorectal cancer (CRC) cells. Required to maintain a transcriptionally repressive state of genes in undifferentiated embryonic stem cells (ESCs). In ESCs, in collaboration with TRIM28, is also required for H3K9me3 and silencing of endogenous and introduced retroviruses in a DNA-methylation independent-pathway. Associates at promoter regions of tumor suppressor genes (TSGs) leading to their gene silencing. The SETDB1-TRIM28-ZNF274 complex may play a role in recruiting ATRX to the 3'-exons of zinc-finger coding genes with atypical chromatin signatures to establish or maintain/protect H3K9me3 at these transcriptionally active regions. This chain is Histone-lysine N-methyltransferase SETDB1, found in Homo sapiens (Human).